Consider the following 348-residue polypeptide: S-adenosyl-L-methionine-dependent methyl transferase PigF (348 aa).

Glu199 contacts S-adenosyl-L-methionine. His247 functions as the Proton acceptor in the catalytic mechanism.

This sequence belongs to the class I-like SAM-binding methyltransferase superfamily. Cation-independent O-methyltransferase family.

Its pathway is antibiotic biosynthesis; prodigiosin biosynthesis. In terms of biological role, involved in the biosynthesis of 4-methoxy-2,2'-bipyrrole-5-carbaldehyde (MBC), one of the terminal products involved in the biosynthesis of the red antibiotic prodigiosin (Pig). Catalyzes the transfer of a methyl group from S-adenosyl-L-methionine (SAM) to the hydroxyl group of 4-hydroxy-2,2'-bipyrrole-5-carbaldehyde (HBC) to yield 4-methoxy-2,2'-bipyrrole-5-carbaldehyde (MBC). This Serratia sp. (strain ATCC 39006) (Prodigiosinella confusarubida) protein is S-adenosyl-L-methionine-dependent methyl transferase PigF.